A 126-amino-acid chain; its full sequence is Probable DNA-directed RNA polymerase II subunit RPB11 (126 aa).

It belongs to the archaeal Rpo11/eukaryotic RPB11/RPC19 RNA polymerase subunit family. As to quaternary structure, component of the RNA polymerase II (Pol II) complex consisting of 12 subunits.

The protein localises to the nucleus. Functionally, DNA-dependent RNA polymerase catalyzes the transcription of DNA into RNA using the four ribonucleoside triphosphates as substrates. Component of RNA polymerase II which synthesizes mRNA precursors and many functional non-coding RNAs. Pol II is the central component of the basal RNA polymerase II transcription machinery. It is composed of mobile elements that move relative to each other. RPB11 is part of the core element with the central large cleft. In Plasmodium falciparum (isolate 3D7), this protein is Probable DNA-directed RNA polymerase II subunit RPB11.